The chain runs to 625 residues: Inactive glucose-6-phosphate 1-dehydrogenase 4, chloroplastic (625 aa).

The N-terminal 49 residues, 1–49 (MSLSSCLLPFSQSATAPSSSVCSCHLAASFSNFPVSSRDYSFSRSGSLV), are a transit peptide targeting the chloroplast. NADP(+) contacts are provided by residues 160-167 (GATGELAR) and arginine 194. An intrachain disulfide couples cysteine 212 to cysteine 220. Residue lysine 297 participates in NADP(+) binding. D-glucose 6-phosphate-binding positions include lysine 297, 327-331 (HMLGR), glutamate 365, and aspartate 382. Residue histidine 387 is the Proton acceptor of the active site. NADP(+) is bound by residues arginine 471, arginine 480, arginine 513, and arginine 606.

The protein belongs to the glucose-6-phosphate dehydrogenase family. As to quaternary structure, forms homodimer. Interacts with G6PD1. Expressed in leaves, stems and buds.

It localises to the plastid. The protein localises to the chloroplast stroma. Seems to be a catalytically inactive enzyme. This chain is Inactive glucose-6-phosphate 1-dehydrogenase 4, chloroplastic, found in Arabidopsis thaliana (Mouse-ear cress).